Reading from the N-terminus, the 31-residue chain is Dermaseptin-7.1TR (31 aa).

Residue Q31 is modified to Glutamine amide.

Expressed by the skin glands.

Its subcellular location is the secreted. Functionally, has antimicrobial activity. This chain is Dermaseptin-7.1TR, found in Phyllomedusa trinitatis (Trinidad leaf frog).